A 364-amino-acid chain; its full sequence is Protein RecA (364 aa).

Residue 77–84 coordinates ATP; it reads GPESSGKT. Positions 343–364 are disordered; sequence DRFLQNGGPDPDDGDGDATAEM. Residues 352-364 show a composition bias toward acidic residues; sequence DPDDGDGDATAEM.

This sequence belongs to the RecA family.

It localises to the cytoplasm. Functionally, can catalyze the hydrolysis of ATP in the presence of single-stranded DNA, the ATP-dependent uptake of single-stranded DNA by duplex DNA, and the ATP-dependent hybridization of homologous single-stranded DNAs. It interacts with LexA causing its activation and leading to its autocatalytic cleavage. In Rhizobium johnstonii (strain DSM 114642 / LMG 32736 / 3841) (Rhizobium leguminosarum bv. viciae), this protein is Protein RecA.